A 352-amino-acid chain; its full sequence is UDP-N-acetylglucosamine--N-acetylmuramyl-(pentapeptide) pyrophosphoryl-undecaprenol N-acetylglucosamine transferase (352 aa).

Serine 195 and glutamine 287 together coordinate UDP-N-acetyl-alpha-D-glucosamine.

The protein belongs to the glycosyltransferase 28 family. MurG subfamily.

The protein resides in the cell membrane. It catalyses the reaction Mur2Ac(oyl-L-Ala-gamma-D-Glu-L-Lys-D-Ala-D-Ala)-di-trans,octa-cis-undecaprenyl diphosphate + UDP-N-acetyl-alpha-D-glucosamine = beta-D-GlcNAc-(1-&gt;4)-Mur2Ac(oyl-L-Ala-gamma-D-Glu-L-Lys-D-Ala-D-Ala)-di-trans,octa-cis-undecaprenyl diphosphate + UDP + H(+). It participates in cell wall biogenesis; peptidoglycan biosynthesis. Cell wall formation. Catalyzes the transfer of a GlcNAc subunit on undecaprenyl-pyrophosphoryl-MurNAc-pentapeptide (lipid intermediate I) to form undecaprenyl-pyrophosphoryl-MurNAc-(pentapeptide)GlcNAc (lipid intermediate II). This chain is UDP-N-acetylglucosamine--N-acetylmuramyl-(pentapeptide) pyrophosphoryl-undecaprenol N-acetylglucosamine transferase, found in Streptococcus pneumoniae (strain JJA).